The following is a 364-amino-acid chain: DNA replication and repair protein RecF (364 aa).

Residue 30–37 (GANGSGKT) participates in ATP binding.

Belongs to the RecF family.

The protein resides in the cytoplasm. The RecF protein is involved in DNA metabolism; it is required for DNA replication and normal SOS inducibility. RecF binds preferentially to single-stranded, linear DNA. It also seems to bind ATP. The polypeptide is DNA replication and repair protein RecF (Sodalis glossinidius (strain morsitans)).